A 426-amino-acid chain; its full sequence is L-cysteine:1D-myo-inositol 2-amino-2-deoxy-alpha-D-glucopyranoside ligase (426 aa).

Residue C43 coordinates Zn(2+). Residues 43–46 (CGIT), S58, and 81–83 (NVT) contribute to the L-cysteinyl-5'-AMP site. The 'HIGH' region motif lies at 45-55 (ITPYDATHMGH). Residues 200–205 (ERGGDP) carry the 'ERGGDP' region motif. W241 serves as a coordination point for L-cysteinyl-5'-AMP. A Zn(2+)-binding site is contributed by C245. L-cysteinyl-5'-AMP is bound at residue 263–265 (GSD). H270 provides a ligand contact to Zn(2+). V296 provides a ligand contact to L-cysteinyl-5'-AMP. The 'KMSKS' region motif lies at 302-306 (KMSKS).

The protein belongs to the class-I aminoacyl-tRNA synthetase family. MshC subfamily. As to quaternary structure, monomer. Zn(2+) serves as cofactor.

The catalysed reaction is 1D-myo-inositol 2-amino-2-deoxy-alpha-D-glucopyranoside + L-cysteine + ATP = 1D-myo-inositol 2-(L-cysteinylamino)-2-deoxy-alpha-D-glucopyranoside + AMP + diphosphate + H(+). In terms of biological role, catalyzes the ATP-dependent condensation of GlcN-Ins and L-cysteine to form L-Cys-GlcN-Ins. In Arthrobacter sp. (strain FB24), this protein is L-cysteine:1D-myo-inositol 2-amino-2-deoxy-alpha-D-glucopyranoside ligase.